The sequence spans 416 residues: Carboxypeptidase B (416 aa).

The N-terminal stretch at 1–15 (MAFLILVTLALASAH) is a signal peptide. Residues 16-109 (YSGEHFEGEK…LEGQFGRQVP (94 aa)) constitute a propeptide, activation peptide. A Peptidase M14 domain is found at 117-411 (KYNRWETIEA…LAIKHLARYV (295 aa)). Residues His175 and Glu178 each contribute to the Zn(2+) site. Residues 175-178 (HARE), Arg233, and 250-251 (TR) each bind substrate. 2 cysteine pairs are disulfide-bonded: Cys244–Cys267 and Cys258–Cys272. His303 contributes to the Zn(2+) binding site. Substrate contacts are provided by residues 304–305 (SY) and Tyr355. Glu377 serves as the catalytic Proton donor/acceptor.

The protein belongs to the peptidase M14 family. It depends on Zn(2+) as a cofactor.

It is found in the secreted. Its subcellular location is the zymogen granule lumen. The catalysed reaction is Preferential release of a C-terminal lysine or arginine amino acid.. The polypeptide is Carboxypeptidase B (CPB1) (Canis lupus familiaris (Dog)).